Here is a 664-residue protein sequence, read N- to C-terminus: Phosphomethylpyrimidine synthase (664 aa).

Substrate is bound by residues Asn235, Met264, Tyr293, His329, 349–351 (SRG), 390–393 (DGMR), and Glu429. His433 contacts Zn(2+). Tyr456 serves as a coordination point for substrate. His497 contacts Zn(2+). 3 residues coordinate [4Fe-4S] cluster: Cys577, Cys580, and Cys585.

Belongs to the ThiC family. Homodimer. It depends on [4Fe-4S] cluster as a cofactor.

The catalysed reaction is 5-amino-1-(5-phospho-beta-D-ribosyl)imidazole + S-adenosyl-L-methionine = 4-amino-2-methyl-5-(phosphooxymethyl)pyrimidine + CO + 5'-deoxyadenosine + formate + L-methionine + 3 H(+). The protein operates within cofactor biosynthesis; thiamine diphosphate biosynthesis. Functionally, catalyzes the synthesis of the hydroxymethylpyrimidine phosphate (HMP-P) moiety of thiamine from aminoimidazole ribotide (AIR) in a radical S-adenosyl-L-methionine (SAM)-dependent reaction. This Shewanella amazonensis (strain ATCC BAA-1098 / SB2B) protein is Phosphomethylpyrimidine synthase.